The primary structure comprises 819 residues: Lon protease (819 aa).

Residues 1–36 (MDSTTNSDSPILDPNPEDVEKLLDESEEESEDQSTE) form a disordered region. Residues 43–240 (LFILPLNKRP…KALILLKKEL (198 aa)) enclose the Lon N-terminal domain. ATP is bound at residue 393–400 (GPPGVGKT). The Lon proteolytic domain occupies 635–817 (STPVGVATGL…DDVLKVAFPK (183 aa)). Residues Ser723 and Lys766 contribute to the active site.

Belongs to the peptidase S16 family. Homohexamer. Organized in a ring with a central cavity.

Its subcellular location is the cytoplasm. The enzyme catalyses Hydrolysis of proteins in presence of ATP.. Functionally, ATP-dependent serine protease that mediates the selective degradation of mutant and abnormal proteins as well as certain short-lived regulatory proteins. Required for cellular homeostasis and for survival from DNA damage and developmental changes induced by stress. Degrades polypeptides processively to yield small peptide fragments that are 5 to 10 amino acids long. Binds to DNA in a double-stranded, site-specific manner. The polypeptide is Lon protease (Chlamydia pneumoniae (Chlamydophila pneumoniae)).